The following is a 358-amino-acid chain: Naringenin,2-oxoglutarate 3-dioxygenase (358 aa).

The 105-residue stretch at 190-294 folds into the Fe2OG dioxygenase domain; sequence CVDMDQKIVV…RLSIATFQNP (105 aa). 3 residues coordinate Fe cation: His-217, Asp-219, and His-275. Arg-285 provides a ligand contact to 2-oxoglutarate.

The protein belongs to the iron/ascorbate-dependent oxidoreductase family. As to quaternary structure, interacts with Dihydroflavonol-4-reductase (TT3), chalcone synthase (TT4) and chalcone isomerase (TT5) to form a flavonoid enzyme complex. Requires Fe(2+) as cofactor. It depends on L-ascorbate as a cofactor.

It carries out the reaction a (2S)-flavan-4-one + 2-oxoglutarate + O2 = a (2R,3R)-dihydroflavonol + succinate + CO2. It participates in secondary metabolite biosynthesis; flavonoid biosynthesis. Functionally, catalyzes the 3-beta-hydroxylation of 2S-flavanones to 2R,3R-dihydroflavonols which are intermediates in the biosynthesis of flavonols, anthocyanidins, catechins and proanthocyanidins in plants. The polypeptide is Naringenin,2-oxoglutarate 3-dioxygenase (F3H) (Arabidopsis thaliana (Mouse-ear cress)).